The chain runs to 83 residues: U25-theraphotoxin-Cg1a (83 aa).

An N-terminal signal peptide occupies residues 1-23 (MRFHTLLFLSFLLLVSCALICTA). The propeptide occupies 24–48 (QHPGLKKSGMFHENVGKGQHIEKKR). Cystine bridges form between Cys50/Cys66, Cys57/Cys71, and Cys65/Cys81.

Belongs to the neurotoxin 07 (Beta/delta-agtx) family. 03 (aga-4) subfamily. JZTX sub-subfamily. In terms of tissue distribution, expressed by the venom gland.

It localises to the secreted. Functionally, inhibits TTX-sensitive sodium currents in rat dorsal root ganglion (DRG) neurons. In Chilobrachys guangxiensis (Chinese earth tiger tarantula), this protein is U25-theraphotoxin-Cg1a.